Consider the following 972-residue polypeptide: RNA polymerase-associated protein RapA (972 aa).

The Helicase ATP-binding domain occupies 164 to 334; the sequence is EVGRRYAPRV…FARLRLLDPD (171 aa). An ATP-binding site is contributed by 177–184; that stretch reads DEVGLGKT. The DEAH box signature appears at 280-283; it reads DEAH. Residues 493 to 671 form the Helicase C-terminal domain; the sequence is RVNWLLEMLK…HEPEALENLI (179 aa).

It belongs to the SNF2/RAD54 helicase family. RapA subfamily. As to quaternary structure, interacts with the RNAP. Has a higher affinity for the core RNAP than for the holoenzyme. Its ATPase activity is stimulated by binding to RNAP.

Transcription regulator that activates transcription by stimulating RNA polymerase (RNAP) recycling in case of stress conditions such as supercoiled DNA or high salt concentrations. Probably acts by releasing the RNAP, when it is trapped or immobilized on tightly supercoiled DNA. Does not activate transcription on linear DNA. Probably not involved in DNA repair. In Photobacterium profundum (strain SS9), this protein is RNA polymerase-associated protein RapA.